Reading from the N-terminus, the 448-residue chain is Exodeoxyribonuclease 7 large subunit (448 aa).

It belongs to the XseA family. Heterooligomer composed of large and small subunits.

It is found in the cytoplasm. The enzyme catalyses Exonucleolytic cleavage in either 5'- to 3'- or 3'- to 5'-direction to yield nucleoside 5'-phosphates.. In terms of biological role, bidirectionally degrades single-stranded DNA into large acid-insoluble oligonucleotides, which are then degraded further into small acid-soluble oligonucleotides. In Shewanella sp. (strain MR-7), this protein is Exodeoxyribonuclease 7 large subunit.